The sequence spans 564 residues: MFS-type transporter grgE (564 aa).

A compositionally biased stretch (basic and acidic residues) spans 1–10; that stretch reads MAENQVDPKR. Residues 1 to 52 form a disordered region; it reads MAENQVDPKRNLPLYGAADESTSATDKEDEVENVRQNGSAPPIEEARESNEA. N37 carries an N-linked (GlcNAc...) asparagine glycan. A run of 7 helical transmembrane segments spans residues 60–80, 101–118, 131–151, 161–181, 192–212, 220–240, and 262–282; these read HGLS…IISL, KVSW…GFQT, TTFL…GVAP, AIAG…IAFS, GLVG…GGAF, WCFY…LIFF, and LVGV…LQYG. An N-linked (GlcNAc...) asparagine glycan is attached at N289. The next 7 membrane-spanning stretches (helical) occupy residues 293–313, 329–349, 368–388, 392–412, 425–445, 462–482, and 531–551; these read VIGL…WEYY, ALWA…ILLY, VRNL…GAFV, GIAT…TGLI, IGYQ…PMNI, IFLA…SAFV, and TFAI…FTPW.

This sequence belongs to the major facilitator superfamily.

The protein resides in the membrane. Functionally, MFS-type transporter; part of the gene cluster that mediates the biosynthesis of gregatin A, a fungal polyketide featuring an alkylated furanone core. The sequence is that of MFS-type transporter grgE from Penicillium sp.